The primary structure comprises 282 residues: Tetraspanin-6 (282 aa).

Residues 1–7 (MYRFSNT) lie on the Cytoplasmic side of the membrane. A helical membrane pass occupies residues 8–28 (VIGVLNLLTLLASIPIIGTAL). Topologically, residues 29-44 (YKARSSTTCENFLQTP) are extracellular. The helical transmembrane segment at 45–65 (LLVIGFIILIVSLAGFIGACF) threads the bilayer. Residues 66–74 (NVAWALWVY) are Cytoplasmic-facing. Residues 75-95 (LVVMIFLIATLMGLTLFGLVV) form a helical membrane-spanning segment. Over 96–220 (TSQGGGVEVP…EIRLDWRKLS (125 aa)) the chain is Extracellular. The helical transmembrane segment at 221–241 (VVNILVLVLLIAVYAAGCCAF) threads the bilayer. The Cytoplasmic segment spans residues 242-282 (HNTRHAAHPYHPSDDNRMTRVRPRWDYYWWRWWHEKKEQLY).

This sequence belongs to the tetraspanin (TM4SF) family.

The protein resides in the membrane. Its function is as follows. May be involved in the regulation of cell differentiation. The chain is Tetraspanin-6 (TET6) from Arabidopsis thaliana (Mouse-ear cress).